A 239-amino-acid polypeptide reads, in one-letter code: Geranylgeranylglyceryl phosphate synthase (239 aa).

K13 contributes to the sn-glycerol 1-phosphate binding site. The Mg(2+) site is built by D15 and T42. Sn-glycerol 1-phosphate is bound by residues 162–167 (YIEYSG), G192, and 212–213 (GD).

This sequence belongs to the GGGP/HepGP synthase family. Group I subfamily. Mg(2+) serves as cofactor.

Its subcellular location is the cytoplasm. It carries out the reaction sn-glycerol 1-phosphate + (2E,6E,10E)-geranylgeranyl diphosphate = sn-3-O-(geranylgeranyl)glycerol 1-phosphate + diphosphate. It participates in membrane lipid metabolism; glycerophospholipid metabolism. In terms of biological role, prenyltransferase that catalyzes the transfer of the geranylgeranyl moiety of geranylgeranyl diphosphate (GGPP) to the C3 hydroxyl of sn-glycerol-1-phosphate (G1P). This reaction is the first ether-bond-formation step in the biosynthesis of archaeal membrane lipids. The chain is Geranylgeranylglyceryl phosphate synthase from Haloquadratum walsbyi (strain DSM 16790 / HBSQ001).